The sequence spans 328 residues: Phenylalanine--tRNA ligase alpha subunit (328 aa).

Residue E245 coordinates Mg(2+).

Belongs to the class-II aminoacyl-tRNA synthetase family. Phe-tRNA synthetase alpha subunit type 1 subfamily. As to quaternary structure, tetramer of two alpha and two beta subunits. Mg(2+) serves as cofactor.

Its subcellular location is the cytoplasm. The enzyme catalyses tRNA(Phe) + L-phenylalanine + ATP = L-phenylalanyl-tRNA(Phe) + AMP + diphosphate + H(+). The polypeptide is Phenylalanine--tRNA ligase alpha subunit (pheS) (Helicobacter pylori (strain ATCC 700392 / 26695) (Campylobacter pylori)).